A 98-amino-acid chain; its full sequence is MFEQTLTSDALVTTTHNHAAEPTQRPLRDSVQQALRNYLAQLNGQEVIDLYDMVLSEVEAPMLDVIMQYTRGNQTRAAVMMGINRGTLRKKLKRYGMN.

Residues 74–93 (QTRAAVMMGINRGTLRKKLK) constitute a DNA-binding region (H-T-H motif).

The protein belongs to the transcriptional regulatory Fis family. As to quaternary structure, homodimer.

Functionally, activates ribosomal RNA transcription. Plays a direct role in upstream activation of rRNA promoters. The protein is DNA-binding protein Fis of Aeromonas hydrophila subsp. hydrophila (strain ATCC 7966 / DSM 30187 / BCRC 13018 / CCUG 14551 / JCM 1027 / KCTC 2358 / NCIMB 9240 / NCTC 8049).